Here is a 146-residue protein sequence, read N- to C-terminus: MNILLINGPNLNLLGTREPEIYGNKTLNDIEKDLNKVAKEKSINLECFQSNHEGEIVDKIQSSVSSISGILINAGAFTHTSISIRDALIGSKIPFVELHISNIFSREEFRKESFLTDKAIGIISGFGITSYFLALEGIIEFLSINN.

The active-site Proton acceptor is Y22. Substrate is bound by residues N73, H79, and D86. Residue H99 is the Proton donor of the active site. Residues 100-101 (IS) and R110 each bind substrate.

It belongs to the type-II 3-dehydroquinase family. As to quaternary structure, homododecamer.

It catalyses the reaction 3-dehydroquinate = 3-dehydroshikimate + H2O. The protein operates within metabolic intermediate biosynthesis; chorismate biosynthesis; chorismate from D-erythrose 4-phosphate and phosphoenolpyruvate: step 3/7. Functionally, catalyzes a trans-dehydration via an enolate intermediate. The polypeptide is 3-dehydroquinate dehydratase (Prochlorococcus marinus subsp. pastoris (strain CCMP1986 / NIES-2087 / MED4)).